Consider the following 48-residue polypeptide: MARFPEAEARLLNVKICMHCNARNPVRAVSCRKCGYVHLRPKNKDRKA.

Belongs to the eukaryotic ribosomal protein eL40 family.

In Methanospirillum hungatei JF-1 (strain ATCC 27890 / DSM 864 / NBRC 100397 / JF-1), this protein is Large ribosomal subunit protein eL40.